The following is a 397-amino-acid chain: 2-isopropylmalate synthase 1 (397 aa).

Positions V6 to Y268 constitute a Pyruvate carboxyltransferase domain. Positions 15, 203, 205, and 239 each coordinate Mn(2+).

This sequence belongs to the alpha-IPM synthase/homocitrate synthase family. LeuA type 1 subfamily. Homodimer. Requires Mn(2+) as cofactor.

The protein resides in the cytoplasm. The catalysed reaction is 3-methyl-2-oxobutanoate + acetyl-CoA + H2O = (2S)-2-isopropylmalate + CoA + H(+). Its pathway is amino-acid biosynthesis; L-leucine biosynthesis; L-leucine from 3-methyl-2-oxobutanoate: step 1/4. In terms of biological role, catalyzes the condensation of the acetyl group of acetyl-CoA with 3-methyl-2-oxobutanoate (2-ketoisovalerate) to form 3-carboxy-3-hydroxy-4-methylpentanoate (2-isopropylmalate). The polypeptide is 2-isopropylmalate synthase 1 (Caldanaerobacter subterraneus subsp. tengcongensis (strain DSM 15242 / JCM 11007 / NBRC 100824 / MB4) (Thermoanaerobacter tengcongensis)).